Consider the following 70-residue polypeptide: U-scoloptoxin(04)-Er3a (70 aa).

An N-terminal signal peptide occupies residues 1–24 (MAAIRNLLILTMLLIVCVSWNADA).

This sequence belongs to the scoloptoxin-04 family. Post-translationally, contains 2 disulfide bonds. In terms of tissue distribution, expressed by the venom gland.

The protein localises to the secreted. The sequence is that of U-scoloptoxin(04)-Er3a from Ethmostigmus rubripes (Giant centipede).